A 445-amino-acid chain; its full sequence is Sporulation protein YkvU (445 aa).

The next 12 membrane-spanning stretches (helical) occupy residues 7–29 (GIILLSIAAFFAECLEFVVNMIL), 39–61 (GLYMSILPTIFLIIVIASLELPI), 82–104 (AFRMTAIFTAFSTAAASIALPFI), 109–131 (TYHPFIKGIVIGLIPVVAFTSIA), 144–166 (IAIANVLKKIIQLLCLFLFFQWY), 172–194 (MAVLISLFVLVVSDVVVLVYLYS), 237–259 (VNAIEPFLVKGALLAAGVAGTAA), 269–291 (VAVTIGSFPAFIAHSLMVVMIPS), 312–334 (IFITLGYGIPAVWVMFQFAGPLT), 349–371 (LLWPYFLFHLFVMPLQACLIGMG), 376–395 (AFYHNVWSHIVALSMMYVLG), and 400–422 (LQMLGIILGMNTGMILLTSLHYA).

The protein localises to the forespore membrane. The chain is Sporulation protein YkvU (ykvU) from Bacillus subtilis (strain 168).